The sequence spans 630 residues: Long-chain-fatty-acid--AMP ligase FadD32 (630 aa).

Residues 187-192, Ser-342, Ala-346, Asp-469, and Arg-483 each bind ATP; that span reads TSGSTR.

It belongs to the ATP-dependent AMP-binding enzyme family. As to quaternary structure, monomer.

It carries out the reaction a long-chain fatty acid + holo-[ACP] + ATP = a long-chain fatty acyl-[ACP] + AMP + diphosphate. The catalysed reaction is decanoate + ATP + H(+) = decanoyl-AMP + diphosphate. It catalyses the reaction dodecanoate + ATP + H(+) = dodecanoyl-AMP + diphosphate. The enzyme catalyses tetradecanoate + ATP + H(+) = tetradecanoyl-AMP + diphosphate. It functions in the pathway lipid metabolism; mycolic acid biosynthesis. Its activity is regulated as follows. The acyl-AMP ligase activity is inhibited by the alkylphosphate ester of AMP, adenosine 50-dodecylphosphate (AMPC12). Also inhibited by eicosyl-AMP (AMPC20). Functionally, involved in the biosynthesis of mycolic acids. Catalyzes the activation of long-chain fatty acids as acyl-adenylates (acyl-AMP), which are then transferred to the phosphopantetheine arm of the polyketide synthase Pks13 for further chain extension. Can use decanoate (C10), dodecanoate (C12) and tetradecanoate (C14). The chain is Long-chain-fatty-acid--AMP ligase FadD32 from Mycolicibacterium smegmatis (strain ATCC 700084 / mc(2)155) (Mycobacterium smegmatis).